The following is a 322-amino-acid chain: 4-diphosphocytidyl-2-C-methyl-D-erythritol kinase (322 aa).

Lys-25 is an active-site residue. Position 110-120 (110-120) interacts with ATP; sequence PVAGGMAGGSA. Asp-152 is an active-site residue.

This sequence belongs to the GHMP kinase family. IspE subfamily.

It carries out the reaction 4-CDP-2-C-methyl-D-erythritol + ATP = 4-CDP-2-C-methyl-D-erythritol 2-phosphate + ADP + H(+). It functions in the pathway isoprenoid biosynthesis; isopentenyl diphosphate biosynthesis via DXP pathway; isopentenyl diphosphate from 1-deoxy-D-xylulose 5-phosphate: step 3/6. In terms of biological role, catalyzes the phosphorylation of the position 2 hydroxy group of 4-diphosphocytidyl-2C-methyl-D-erythritol. The sequence is that of 4-diphosphocytidyl-2-C-methyl-D-erythritol kinase from Mycolicibacterium vanbaalenii (strain DSM 7251 / JCM 13017 / BCRC 16820 / KCTC 9966 / NRRL B-24157 / PYR-1) (Mycobacterium vanbaalenii).